Reading from the N-terminus, the 201-residue chain is Mediator of RNA polymerase II transcription subunit 19 (201 aa).

Residues 166–201 (GTGKSNAKKRKNRSNGSSMATPNSEMQDDVKRRRLE) form a disordered region.

It belongs to the Mediator complex subunit 19 family. In terms of assembly, component of the Mediator complex.

It is found in the nucleus. Functionally, component of the Mediator complex, a coactivator involved in the regulated transcription of nearly all RNA polymerase II-dependent genes. Mediator functions as a bridge to convey information from gene-specific regulatory proteins to the basal RNA polymerase II transcription machinery. Mediator is recruited to promoters by direct interactions with regulatory proteins and serves as a scaffold for the assembly of a functional preinitiation complex with RNA polymerase II and the general transcription factors. The chain is Mediator of RNA polymerase II transcription subunit 19 (ROX3) from Candida glabrata (strain ATCC 2001 / BCRC 20586 / JCM 3761 / NBRC 0622 / NRRL Y-65 / CBS 138) (Yeast).